The chain runs to 142 residues: Maximins y/Hv type 1 (142 aa).

The N-terminal stretch at 1–18 is a signal peptide; the sequence is MNFKYIVAVSFLIASGYA. Residues 19 to 43 constitute a propeptide that is removed on maturation; sequence RSEENDVQSLSQREVLEEESLREIR. Phe68 is subject to Phenylalanine amide. Positions 72 to 121 are excised as a propeptide; that stretch reads TAEDHEVMKRLEAVMRDLDSLDHPEEASERETRGFNQEEIANLFTKKEKR. At Ile141 the chain carries Isoleucine amide.

It belongs to the bombinin family. In terms of tissue distribution, expressed by the skin glands.

Its subcellular location is the secreted. In terms of biological role, maximin-y shows antimicrobial activity against bacteria and against the fungus C.albicans. It has little hemolytic activity. Functionally, maximin-Hv shows antimicrobial activity against bacteria and against the fungus C.albicans. Shows strong hemolytic activity. This Bombina maxima (Giant fire-bellied toad) protein is Maximins y/Hv type 1.